The primary structure comprises 185 residues: Large ribosomal subunit protein uL5 (185 aa).

The protein belongs to the universal ribosomal protein uL5 family. In terms of assembly, part of the 50S ribosomal subunit; part of the 5S rRNA/L5/L18/L25 subcomplex. Contacts the 5S rRNA and the P site tRNA. Forms a bridge to the 30S subunit in the 70S ribosome.

Its function is as follows. This is one of the proteins that bind and probably mediate the attachment of the 5S RNA into the large ribosomal subunit, where it forms part of the central protuberance. In the 70S ribosome it contacts protein S13 of the 30S subunit (bridge B1b), connecting the 2 subunits; this bridge is implicated in subunit movement. Contacts the P site tRNA; the 5S rRNA and some of its associated proteins might help stabilize positioning of ribosome-bound tRNAs. The protein is Large ribosomal subunit protein uL5 of Caulobacter vibrioides (strain NA1000 / CB15N) (Caulobacter crescentus).